Consider the following 216-residue polypeptide: MRTGILGGTFNPIHHAHLRIAEEVRDAFALDQVIFIPAASPPHKPMEGEIPFEVRCEMVRLATADNPSFAVSDLEGRRTGKSYSIDTLRELRRERPGDEFFFIIGSDSFLDFGSWHEYEAIFSSCNIVAVERPGAVIRDLAAAIPVAVAPQFCYHAAEKRLAHRSGYSVYYLAGIPLDISSSAIRRLARLGRSIRYLVPEPVAHYITEQRIYTHDR.

This sequence belongs to the NadD family.

It catalyses the reaction nicotinate beta-D-ribonucleotide + ATP + H(+) = deamido-NAD(+) + diphosphate. The protein operates within cofactor biosynthesis; NAD(+) biosynthesis; deamido-NAD(+) from nicotinate D-ribonucleotide: step 1/1. Catalyzes the reversible adenylation of nicotinate mononucleotide (NaMN) to nicotinic acid adenine dinucleotide (NaAD). This chain is Probable nicotinate-nucleotide adenylyltransferase, found in Geobacter metallireducens (strain ATCC 53774 / DSM 7210 / GS-15).